We begin with the raw amino-acid sequence, 124 residues long: Ribonuclease P protein component (124 aa).

It belongs to the RnpA family. Consists of a catalytic RNA component (M1 or rnpB) and a protein subunit.

It catalyses the reaction Endonucleolytic cleavage of RNA, removing 5'-extranucleotides from tRNA precursor.. RNaseP catalyzes the removal of the 5'-leader sequence from pre-tRNA to produce the mature 5'-terminus. It can also cleave other RNA substrates such as 4.5S RNA. The protein component plays an auxiliary but essential role in vivo by binding to the 5'-leader sequence and broadening the substrate specificity of the ribozyme. This is Ribonuclease P protein component from Mycolicibacterium gilvum (strain PYR-GCK) (Mycobacterium gilvum (strain PYR-GCK)).